Reading from the N-terminus, the 754-residue chain is Ribonucleoside-diphosphate reductase subunit alpha (754 aa).

The ATP-cone domain maps to 4–93 (INVIKSSGVS…MFALRKHVYG (90 aa)). Substrate is bound by residues T206, 221 to 222 (SC), G250, 435 to 439 (NLCCE), and 615 to 619 (PCESS). Cysteines 222 and 457 form a disulfide. The Proton acceptor role is filled by N435. C437 (cysteine radical intermediate) is an active-site residue. The active-site Proton acceptor is the E439. A disordered region spans residues 621 to 641 (QVSNSTNGYEPPRGPVSVKES).

This sequence belongs to the ribonucleoside diphosphate reductase large chain family. In terms of assembly, heterodimer of a large and a small subunit.

It carries out the reaction a 2'-deoxyribonucleoside 5'-diphosphate + [thioredoxin]-disulfide + H2O = a ribonucleoside 5'-diphosphate + [thioredoxin]-dithiol. With respect to regulation, under complex allosteric control mediated by deoxynucleoside triphosphates and ATP binding. The type of nucleotide bound at the specificity site determines substrate preference. It seems probable that ATP makes the enzyme reduce CDP and UDP, dGTP favors ADP reduction and dTTP favors GDP reduction. In terms of biological role, provides the precursors necessary for DNA synthesis. Catalyzes the biosynthesis of deoxyribonucleotides from the corresponding ribonucleotides. The sequence is that of Ribonucleoside-diphosphate reductase subunit alpha (NRDA) from Escherichia coli (Bacteriophage T4).